We begin with the raw amino-acid sequence, 829 residues long: DNA ligase (829 aa).

Residues 38–42 (DAEYD), 87–88 (SL), and glutamate 127 contribute to the NAD(+) site. Catalysis depends on lysine 129, which acts as the N6-AMP-lysine intermediate. NAD(+)-binding residues include arginine 150, glutamate 187, lysine 305, and lysine 329. Zn(2+)-binding residues include cysteine 455, cysteine 458, cysteine 473, and cysteine 479. The segment at 534–564 (ETADKGSSENENGDAETVSGDLSKYNTQNGK) is disordered. In terms of domain architecture, BRCT spans 752-829 (GINKAVAGKT…SEAELLTLLC (78 aa)).

This sequence belongs to the NAD-dependent DNA ligase family. LigA subfamily. Mg(2+) serves as cofactor. Mn(2+) is required as a cofactor.

It catalyses the reaction NAD(+) + (deoxyribonucleotide)n-3'-hydroxyl + 5'-phospho-(deoxyribonucleotide)m = (deoxyribonucleotide)n+m + AMP + beta-nicotinamide D-nucleotide.. DNA ligase that catalyzes the formation of phosphodiester linkages between 5'-phosphoryl and 3'-hydroxyl groups in double-stranded DNA using NAD as a coenzyme and as the energy source for the reaction. It is essential for DNA replication and repair of damaged DNA. This is DNA ligase from Neisseria gonorrhoeae (strain ATCC 700825 / FA 1090).